The chain runs to 152 residues: Catabolic 3-dehydroquinase (152 aa).

The active-site Proton acceptor is tyrosine 24. Residues asparagine 75, histidine 81, and aspartate 88 each contribute to the substrate site. Histidine 101 acts as the Proton donor in catalysis. Residues 102-103 (IS) and arginine 112 contribute to the substrate site.

This sequence belongs to the type-II 3-dehydroquinase family. Homododecamer. Adopts a ring-like structure, composed of an arrangement of two hexameric rings stacked on top of one another.

The catalysed reaction is 3-dehydroquinate = 3-dehydroshikimate + H2O. It participates in aromatic compound metabolism; 3,4-dihydroxybenzoate biosynthesis; 3,4-dihydroxybenzoate from 3-dehydroquinate: step 1/2. Functionally, is involved in the catabolism of quinate. Allows the utilization of quinate as carbon source via the beta-ketoadipate pathway. This chain is Catabolic 3-dehydroquinase, found in Phaeosphaeria nodorum (strain SN15 / ATCC MYA-4574 / FGSC 10173) (Glume blotch fungus).